Reading from the N-terminus, the 329-residue chain is Putative methylthioribose-1-phosphate isomerase (329 aa).

Substrate-binding positions include 50–52 (RGA), Arg-84, and Gln-182. Asp-223 (proton donor) is an active-site residue. 233–234 (NK) lines the substrate pocket.

This sequence belongs to the eIF-2B alpha/beta/delta subunits family. MtnA subfamily.

It catalyses the reaction 5-(methylsulfanyl)-alpha-D-ribose 1-phosphate = 5-(methylsulfanyl)-D-ribulose 1-phosphate. Its function is as follows. Catalyzes the interconversion of methylthioribose-1-phosphate (MTR-1-P) into methylthioribulose-1-phosphate (MTRu-1-P). The polypeptide is Putative methylthioribose-1-phosphate isomerase (Methanocaldococcus jannaschii (strain ATCC 43067 / DSM 2661 / JAL-1 / JCM 10045 / NBRC 100440) (Methanococcus jannaschii)).